The chain runs to 764 residues: 5-methyltetrahydropteroyltriglutamate--homocysteine methyltransferase (764 aa).

Residues 16-19 and Lys-115 each bind 5-methyltetrahydropteroyltri-L-glutamate; that span reads RELK. Residues 435–437 and Glu-488 each bind L-homocysteine; that span reads IGS. Residues 435–437 and Glu-488 each bind L-methionine; that span reads IGS. 5-methyltetrahydropteroyltri-L-glutamate is bound by residues 519–520 and Trp-565; that span reads RC. L-homocysteine is bound at residue Asp-603. L-methionine is bound at residue Asp-603. Residue Glu-609 coordinates 5-methyltetrahydropteroyltri-L-glutamate. Zn(2+) contacts are provided by His-645, Cys-647, and Glu-669. The active-site Proton donor is the His-698. Cys-730 is a binding site for Zn(2+).

This sequence belongs to the vitamin-B12 independent methionine synthase family. It depends on Zn(2+) as a cofactor.

The enzyme catalyses 5-methyltetrahydropteroyltri-L-glutamate + L-homocysteine = tetrahydropteroyltri-L-glutamate + L-methionine. Its pathway is amino-acid biosynthesis; L-methionine biosynthesis via de novo pathway; L-methionine from L-homocysteine (MetE route): step 1/1. Catalyzes the transfer of a methyl group from 5-methyltetrahydrofolate to homocysteine resulting in methionine formation. This chain is 5-methyltetrahydropteroyltriglutamate--homocysteine methyltransferase, found in Burkholderia pseudomallei (strain 668).